Here is a 108-residue protein sequence, read N- to C-terminus: Putative septation protein SpoVG (108 aa).

The protein belongs to the SpoVG family.

Could be involved in septation. This Bdellovibrio bacteriovorus (strain ATCC 15356 / DSM 50701 / NCIMB 9529 / HD100) protein is Putative septation protein SpoVG.